Here is a 303-residue protein sequence, read N- to C-terminus: Probable 5-dehydro-4-deoxyglucarate dehydratase (303 aa).

The protein belongs to the DapA family.

The enzyme catalyses 5-dehydro-4-deoxy-D-glucarate + H(+) = 2,5-dioxopentanoate + CO2 + H2O. Its pathway is carbohydrate acid metabolism; D-glucarate degradation; 2,5-dioxopentanoate from D-glucarate: step 2/2. The protein is Probable 5-dehydro-4-deoxyglucarate dehydratase of Azotobacter vinelandii (strain DJ / ATCC BAA-1303).